The primary structure comprises 416 residues: Actin-like protein 9 (416 aa).

A disordered region spans residues 1 to 40 (MDASRPKSSESQSSLEAPRPGPNPSPNVVNKPLQRDSPGM).

Belongs to the actin family. In terms of assembly, interacts with ACTL7A. In terms of tissue distribution, testis-specific.

It is found in the cytoplasmic vesicle. It localises to the secretory vesicle. Its subcellular location is the acrosome. The protein resides in the cytoplasm. The protein localises to the cytoskeleton. It is found in the perinuclear theca. Testis-specic protein that plays an important role in fusion of proacrosomal vesicles and perinuclear theca formation. This chain is Actin-like protein 9, found in Homo sapiens (Human).